We begin with the raw amino-acid sequence, 107 residues long: Magnetosome protein MmsF (107 aa).

At 1-13 (MTEAILRSTLGAR) the chain is on the cytoplasmic side. Residues 14 to 34 (TTVMAALSYLSVLCFVPLLVD) traverse the membrane as a helical segment. Residues 35 to 46 (RDDEFVYFHAKQ) are Lumenal-facing. The chain crosses the membrane as a helical span at residues 47 to 67 (GLVIWMWGVLALFALHVPVLG). Residues 68 to 69 (KW) lie on the Cytoplasmic side of the membrane. Residues 70 to 90 (IFGFSSMGVLVFSLLGLVSVV) traverse the membrane as a helical segment. Residues 91–107 (FQRAWKLPLISWVAHRI) are Lumenal-facing.

This sequence belongs to the magnetosome MamF/MmsF protein family. In terms of assembly, may oligomerize.

Its subcellular location is the magnetosome membrane. Its function may be negatively regulated by one of the MamGFDC proteins. Functionally, plays a major role in synthesis of cubooctahedral magnetite crystals by controlling crystal growth and morphology after nucleation. Has a partially redundant function with MamF. When overexpressed in E.coli the soluble protein self assembles into shells of about 36 nm. This protein mediates the formation of magnetite nanoparticles from a solution of Fe(2+) and Fe(3+) sulfate; the crystals are larger and lack alternative iron oxide/oxyhydroxide species seen in the protein's absence. In Paramagnetospirillum magneticum (strain ATCC 700264 / AMB-1) (Magnetospirillum magneticum), this protein is Magnetosome protein MmsF.